Consider the following 291-residue polypeptide: 4-hydroxy-tetrahydrodipicolinate synthase (291 aa).

Threonine 42 serves as a coordination point for pyruvate. Tyrosine 129 functions as the Proton donor/acceptor in the catalytic mechanism. Residue lysine 157 is the Schiff-base intermediate with substrate of the active site. Isoleucine 198 is a binding site for pyruvate.

It belongs to the DapA family. In terms of assembly, homotetramer; dimer of dimers.

It is found in the cytoplasm. The catalysed reaction is L-aspartate 4-semialdehyde + pyruvate = (2S,4S)-4-hydroxy-2,3,4,5-tetrahydrodipicolinate + H2O + H(+). Its pathway is amino-acid biosynthesis; L-lysine biosynthesis via DAP pathway; (S)-tetrahydrodipicolinate from L-aspartate: step 3/4. Its function is as follows. Catalyzes the condensation of (S)-aspartate-beta-semialdehyde [(S)-ASA] and pyruvate to 4-hydroxy-tetrahydrodipicolinate (HTPA). This is 4-hydroxy-tetrahydrodipicolinate synthase from Chlamydia pneumoniae (Chlamydophila pneumoniae).